An 85-amino-acid chain; its full sequence is UPF0297 protein Clos_1665 (85 aa).

This sequence belongs to the UPF0297 family.

This is UPF0297 protein Clos_1665 from Alkaliphilus oremlandii (strain OhILAs) (Clostridium oremlandii (strain OhILAs)).